The following is a 324-amino-acid chain: Putative exosome complex exonuclease RRP42 (324 aa).

This sequence belongs to the RNase PH family. In terms of assembly, component of the RNA exosome complex.

Its subcellular location is the nucleus. The protein resides in the nucleolus. The protein localises to the cytoplasm. In terms of biological role, non-catalytic component of the RNA exosome complex which has 3'-&gt;5' exoribonuclease activity and participates in a multitude of cellular RNA processing and degradation events. This chain is Putative exosome complex exonuclease RRP42 (exosc7), found in Dictyostelium discoideum (Social amoeba).